Here is a 415-residue protein sequence, read N- to C-terminus: Dynein assembly factor with WD repeat domains 1 (415 aa).

WD repeat units follow at residues 90–129 (AHILPLTNVALNKSGSCFITGSYDRTCKLWDTASGEELNT), 132–174 (GHRN…HTFR), 175–214 (GHTAEIVCLSFNPQSTLVATGSMDTTAKLWNIQNGEEVCT), 217–256 (GHSAEIISLSFNTSGDRIITGSFDHTVVVWDADTGGKVNI), 259–298 (GHCAEISSALFNWDCSLILTGSMDKTCMLWDATNGKCVAT), 301–340 (GHDDEILDSCFDYTGKLIATASADGTARIFSAATRKCIAK), 343–384 (GHEG…QVLE), and 386–415 (HTDEIFSCTFNYKGNIVITGSKDNTCRIWR).

This sequence belongs to the WD repeat WDR69 family. As to quaternary structure, interacts with IFT46.

It is found in the cytoplasm. The protein localises to the cytoskeleton. Its subcellular location is the flagellum basal body. It localises to the flagellum axoneme. Functionally, required for axonemal dynein assembly and ciliary motility in ciliated organs, including Kupffer's vesicle, during embryogenesis. Facilitates the onset of robust cilia motility during development. The polypeptide is Dynein assembly factor with WD repeat domains 1 (DAW1) (Macaca fascicularis (Crab-eating macaque)).